The sequence spans 130 residues: Mating-type-like protein A1 (130 aa).

Positions 68–127 (TYTTRKPLPAKAKLQLVETFSKKRYLTRCEKHQLAVQCGITTNQVQIWFANRRKRSKDLN) form a DNA-binding region, homeobox.

It belongs to the MATA1 family.

It localises to the nucleus. Its function is as follows. Mating type proteins are sequence specific DNA-binding proteins that act as master switches in yeast differentiation by controlling gene expression in a cell type-specific fashion. The polypeptide is Mating-type-like protein A1 (MTL1A1) (Candida glabrata (strain ATCC 2001 / BCRC 20586 / JCM 3761 / NBRC 0622 / NRRL Y-65 / CBS 138) (Yeast)).